Consider the following 171-residue polypeptide: 3-hydroxydecanoyl-[acyl-carrier-protein] dehydratase (171 aa).

H70 is a catalytic residue.

It belongs to the thioester dehydratase family. FabA subfamily. In terms of assembly, homodimer.

It localises to the cytoplasm. It carries out the reaction a (3R)-hydroxyacyl-[ACP] = a (2E)-enoyl-[ACP] + H2O. The catalysed reaction is (3R)-hydroxydecanoyl-[ACP] = (2E)-decenoyl-[ACP] + H2O. It catalyses the reaction (2E)-decenoyl-[ACP] = (3Z)-decenoyl-[ACP]. It functions in the pathway lipid metabolism; fatty acid biosynthesis. Functionally, necessary for the introduction of cis unsaturation into fatty acids. Catalyzes the dehydration of (3R)-3-hydroxydecanoyl-ACP to E-(2)-decenoyl-ACP and then its isomerization to Z-(3)-decenoyl-ACP. Can catalyze the dehydratase reaction for beta-hydroxyacyl-ACPs with saturated chain lengths up to 16:0, being most active on intermediate chain length. The polypeptide is 3-hydroxydecanoyl-[acyl-carrier-protein] dehydratase (Pseudomonas putida (strain GB-1)).